The following is a 489-amino-acid chain: Zinc finger protein 58 (489 aa).

One can recognise a KRAB domain in the interval 2–73 (LSFWDVAIDF…KRQAAAAVHP (72 aa)). The segment at 78–100 (NKCKDFSKAFFCKSLLTQHQRIR) adopts a C2H2-type 1; degenerate zinc-finger fold. 14 C2H2-type zinc fingers span residues 106–128 (FKCE…KRIH), 134–156 (YKCE…QRVH), 162–184 (YKCE…KRIH), 190–212 (YKCE…QKNH), 218–240 (YKCE…QRIH), 246–268 (YKCE…QIIH), 274–296 (YKCA…QRIH), 302–324 (CKCK…QRIH), 330–352 (YKCG…QRFH), 358–380 (YKCE…KLRH), 386–408 (YKCE…QKIH), 410–432 (YKCG…QRVH), 438–460 (HVCE…QLVH), and 466–488 (YKCE…QGIH).

It belongs to the krueppel C2H2-type zinc-finger protein family. As to expression, expressed in liver, testis and, at considerably lower levels, in brain, spleen and heart.

It is found in the nucleus. Functionally, may have a role during differentiation processes. This Mus musculus (Mouse) protein is Zinc finger protein 58 (Zfp58).